The chain runs to 119 residues: DNA-binding protein inhibitor ID-3 (119 aa).

The bHLH domain maps to 28–80 (RGKGPAAEEPLSLLDDMNHCYSRLRELVPGVPRGTQLSQVEILQRVIDYILDL).

Homodimer, and heterodimer with other HLH proteins. Interacts with COPS5 and COPS7A. Interacts with IFI204. Interacts with GATA4 and NKX2-5. Interacts with ANKRD2; both proteins cooperate in myoblast differentiation. Interacts with CLOCK and BMAL1. As to expression, expressed abundantly in lung, kidney and adrenal gland, but not in adult brain.

It is found in the nucleus. In terms of biological role, transcriptional regulator (lacking a basic DNA binding domain) which negatively regulates the basic helix-loop-helix (bHLH) transcription factors by forming heterodimers and inhibiting their DNA binding and transcriptional activity. Implicated in regulating a variety of cellular processes, including cellular growth, senescence, differentiation, apoptosis, angiogenesis, and neoplastic transformation. Involved in myogenesis by inhibiting skeletal muscle and cardiac myocyte differentiation and promoting muscle precursor cells proliferation. Inhibits the binding of E2A-containing protein complexes to muscle creatine kinase E-box enhancer. Regulates the circadian clock by repressing the transcriptional activator activity of the CLOCK-BMAL1 heterodimer. This chain is DNA-binding protein inhibitor ID-3 (ID3), found in Homo sapiens (Human).